The following is a 57-amino-acid chain: UPF0391 membrane protein azo1765 (57 aa).

The next 2 membrane-spanning stretches (helical) occupy residues 1 to 21 (MIKW…FGFT) and 33 to 53 (VLFF…VGLG).

The protein belongs to the UPF0391 family.

The protein resides in the cell membrane. The polypeptide is UPF0391 membrane protein azo1765 (Azoarcus sp. (strain BH72)).